Here is a 360-residue protein sequence, read N- to C-terminus: Peptide chain release factor 1 (360 aa).

Gln234 carries the post-translational modification N5-methylglutamine.

This sequence belongs to the prokaryotic/mitochondrial release factor family. Methylated by PrmC. Methylation increases the termination efficiency of RF1.

The protein localises to the cytoplasm. Its function is as follows. Peptide chain release factor 1 directs the termination of translation in response to the peptide chain termination codons UAG and UAA. This is Peptide chain release factor 1 from Clostridium perfringens (strain 13 / Type A).